A 446-amino-acid polypeptide reads, in one-letter code: N-succinylarginine dihydrolase 2 (446 aa).

Substrate contacts are provided by residues 20–29 (VGLSPGNLAS), N111, and 138–139 (HR). E175 is an active-site residue. R212 provides a ligand contact to substrate. The active site involves H246. Substrate contacts are provided by D248 and N361. C367 acts as the Nucleophile in catalysis.

Belongs to the succinylarginine dihydrolase family. Homodimer.

The enzyme catalyses N(2)-succinyl-L-arginine + 2 H2O + 2 H(+) = N(2)-succinyl-L-ornithine + 2 NH4(+) + CO2. The protein operates within amino-acid degradation; L-arginine degradation via AST pathway; L-glutamate and succinate from L-arginine: step 2/5. In terms of biological role, catalyzes the hydrolysis of N(2)-succinylarginine into N(2)-succinylornithine, ammonia and CO(2). This is N-succinylarginine dihydrolase 2 from Caulobacter vibrioides (strain ATCC 19089 / CIP 103742 / CB 15) (Caulobacter crescentus).